The chain runs to 95 residues: Aspartyl/glutamyl-tRNA(Asn/Gln) amidotransferase subunit C (95 aa).

Belongs to the GatC family. Heterotrimer of A, B and C subunits.

The catalysed reaction is L-glutamyl-tRNA(Gln) + L-glutamine + ATP + H2O = L-glutaminyl-tRNA(Gln) + L-glutamate + ADP + phosphate + H(+). The enzyme catalyses L-aspartyl-tRNA(Asn) + L-glutamine + ATP + H2O = L-asparaginyl-tRNA(Asn) + L-glutamate + ADP + phosphate + 2 H(+). Functionally, allows the formation of correctly charged Asn-tRNA(Asn) or Gln-tRNA(Gln) through the transamidation of misacylated Asp-tRNA(Asn) or Glu-tRNA(Gln) in organisms which lack either or both of asparaginyl-tRNA or glutaminyl-tRNA synthetases. The reaction takes place in the presence of glutamine and ATP through an activated phospho-Asp-tRNA(Asn) or phospho-Glu-tRNA(Gln). This chain is Aspartyl/glutamyl-tRNA(Asn/Gln) amidotransferase subunit C, found in Rhodopseudomonas palustris (strain BisB18).